A 155-amino-acid chain; its full sequence is SsrA-binding protein (155 aa).

Positions 135 to 147 (TIKRRDQERDIKK) are enriched in basic and acidic residues. Residues 135 to 155 (TIKRRDQERDIKKQMKHYNAR) form a disordered region.

Belongs to the SmpB family.

It localises to the cytoplasm. In terms of biological role, required for rescue of stalled ribosomes mediated by trans-translation. Binds to transfer-messenger RNA (tmRNA), required for stable association of tmRNA with ribosomes. tmRNA and SmpB together mimic tRNA shape, replacing the anticodon stem-loop with SmpB. tmRNA is encoded by the ssrA gene; the 2 termini fold to resemble tRNA(Ala) and it encodes a 'tag peptide', a short internal open reading frame. During trans-translation Ala-aminoacylated tmRNA acts like a tRNA, entering the A-site of stalled ribosomes, displacing the stalled mRNA. The ribosome then switches to translate the ORF on the tmRNA; the nascent peptide is terminated with the 'tag peptide' encoded by the tmRNA and targeted for degradation. The ribosome is freed to recommence translation, which seems to be the essential function of trans-translation. The chain is SsrA-binding protein from Streptococcus pyogenes serotype M6 (strain ATCC BAA-946 / MGAS10394).